The sequence spans 101 residues: Movement protein (101 aa).

A helical membrane pass occupies residues 30–50 (EVAILSFVALICFYLLYLWVL). A disordered region spans residues 75 to 101 (VDRSNPIPNIPAPPSQGNPGPFVPGTG).

It belongs to the mastrevirus movement protein family. As to quaternary structure, interacts with the capsid protein (CP). Part of a MP-CP-viral DNA complex.

It localises to the host membrane. Its function is as follows. Involved in the viral transport within, and between cells. This is Movement protein from Maize streak virus genotype A (isolate Kenya) (MSV).